A 331-amino-acid chain; its full sequence is MAKLFYDSDADLGLLQDKTVAIIGYGSQGHAHALNLKDSGIKVVVGLYEGSRSASKAKSDGLEVLSVAEASERADWIMILLPDEFQKDVYSKEIAPHLKAGKILSFAHGFNIRFELIKPPEFVDVVMIAPKGPGHTVRWEYQNGQGVPALFAIEQDASGNARALAMAYAKGIGGTRAGILETNFKEETETDLFGEQAVLCGGLSELVKAGFETLVEAGYQPELAYFECLHEVKLIVDLMVKGGLTAMRDSISNTAEYGDYVSGPRLITKETKEEMKNILADIQDGTFAKNFVKECDAGKPEMKRIRQKDSELPIEKVGKTLRSMFSWLKSD.

The KARI N-terminal Rossmann domain maps to 2–182; the sequence is AKLFYDSDAD…GGTRAGILET (181 aa). NADP(+) contacts are provided by residues 25-28, Ser51, Ser53, and 83-86; these read YGSQ and DEFQ. Residue His108 is part of the active site. Residue Gly134 coordinates NADP(+). The 146-residue stretch at 183-328 folds into the KARI C-terminal knotted domain; the sequence is NFKEETETDL…KTLRSMFSWL (146 aa). Asp191, Glu195, Glu227, and Glu231 together coordinate Mg(2+). Ser252 is a binding site for substrate.

The protein belongs to the ketol-acid reductoisomerase family. It depends on Mg(2+) as a cofactor.

The enzyme catalyses (2R)-2,3-dihydroxy-3-methylbutanoate + NADP(+) = (2S)-2-acetolactate + NADPH + H(+). It catalyses the reaction (2R,3R)-2,3-dihydroxy-3-methylpentanoate + NADP(+) = (S)-2-ethyl-2-hydroxy-3-oxobutanoate + NADPH + H(+). It functions in the pathway amino-acid biosynthesis; L-isoleucine biosynthesis; L-isoleucine from 2-oxobutanoate: step 2/4. Its pathway is amino-acid biosynthesis; L-valine biosynthesis; L-valine from pyruvate: step 2/4. Functionally, involved in the biosynthesis of branched-chain amino acids (BCAA). Catalyzes an alkyl-migration followed by a ketol-acid reduction of (S)-2-acetolactate (S2AL) to yield (R)-2,3-dihydroxy-isovalerate. In the isomerase reaction, S2AL is rearranged via a Mg-dependent methyl migration to produce 3-hydroxy-3-methyl-2-ketobutyrate (HMKB). In the reductase reaction, this 2-ketoacid undergoes a metal-dependent reduction by NADPH to yield (R)-2,3-dihydroxy-isovalerate. This is Ketol-acid reductoisomerase (NADP(+)) from Prochlorococcus marinus (strain NATL1A).